The sequence spans 227 residues: 4'-phosphopantetheinyl transferase PptT (227 aa).

CoA is bound by residues arginine 48, arginine 56, 75-78 (KGDK), 92-93 (TH), and aspartate 114. Mg(2+) is bound by residues aspartate 114, alanine 115, and glutamate 116. The CoA site is built by glutamate 157, lysine 161, and leucine 171.

It belongs to the P-Pant transferase superfamily. Mg(2+) serves as cofactor.

It carries out the reaction apo-[ACP] + CoA = holo-[ACP] + adenosine 3',5'-bisphosphate + H(+). With respect to regulation, inhibited by the amidino-urea compound 1-[(2,6-diethylphenyl)-3-N-ethylcarbamimodoyl]urea (compound 8918). It acts by binding to the phosphopantetheine pocket in the active site. Inhibition by compound 8918 kills M.tuberculosis. Functionally, transfers the 4'-phosphopantetheine moiety from coenzyme A to a Ser of acyl-carrier-protein. Involved in post-translational modification of various type-I polyketide synthases required for the formation of both mycolic acids and lipid virulence factors. Acts on Pks13, Mas, PpsA, PpsB, PpsC and PpsD. Also acts on AcpM, the meromycolate extension acyl carrier protein. In addition, is involved in the activation of the acyl carrier protein MbtL and the nonribosomal peptides synthases MbtB and MbtE, which are involved in the biosynthesis of the siderophore mycobactin. Required for the replication and survival of Mycobacterium during the acute and chronic phases of infection in mice. In Mycobacterium tuberculosis (strain ATCC 25618 / H37Rv), this protein is 4'-phosphopantetheinyl transferase PptT.